The following is a 241-amino-acid chain: Glutathione S-transferase omega-1 (241 aa).

Residue serine 2 is modified to N-acetylserine. Residues 22–101 (GLIRVYSMRF…YLDEAYPGKK (80 aa)) form the GST N-terminal domain. Cysteine 32 functions as the Nucleophile in the catalytic mechanism. Lysine 57 carries the N6-acetyllysine modification. Glutathione is bound by residues lysine 59, valine 72, and 85–86 (ES). Positions 106–225 (DPYEKACQKM…HIEPRDLRAF (120 aa)) constitute a GST C-terminal domain. 3 positions are modified to N6-acetyllysine: lysine 143, lysine 148, and lysine 152.

In terms of assembly, homodimer. In terms of tissue distribution, most abundant in the liver and skeletal muscle; also expressed in heart, diaphragm, colon, thymus, kidney, lung, ovaries, spleen, intestine and pancreas.

It is found in the cytoplasm. The protein resides in the cytosol. It catalyses the reaction RX + glutathione = an S-substituted glutathione + a halide anion + H(+). The catalysed reaction is L-dehydroascorbate + 2 glutathione = glutathione disulfide + L-ascorbate. The enzyme catalyses methylarsonate + 2 glutathione + H(+) = methylarsonous acid + glutathione disulfide + H2O. In terms of biological role, exhibits glutathione-dependent thiol transferase and dehydroascorbate reductase activities. Has S-(phenacyl)glutathione reductase activity. Also has glutathione S-transferase activity. Participates in the biotransformation of inorganic arsenic and reduces monomethylarsonic acid (MMA) and dimethylarsonic acid. In Sus scrofa (Pig), this protein is Glutathione S-transferase omega-1 (GSTO1).